The primary structure comprises 301 residues: Heterogeneous nuclear ribonucleoprotein D-like (301 aa).

2 consecutive RRM domains span residues 29-111 (GKMF…KGKE) and 114-193 (KKVF…QPKE). N6-methyllysine is present on K42. Residue K90 forms a Glycyl lysine isopeptide (Lys-Gly) (interchain with G-Cter in SUMO2) linkage. Position 97 is an N6-acetyllysine (K97). S122 bears the Phosphoserine mark. 2 disordered regions span residues 194–229 (VYRQQQQQQKGGRGAAAGGRGGARGRGRGQGQNWNQ) and 279–301 (GQQSTYGKASRGGGNHQNNYQPY). The segment covering 204–223 (GGRGAAAGGRGGARGRGRGQ) has biased composition (gly residues). A necessary for interaction with TNPO1 region spans residues 223–301 (QGQNWNQGFN…GNHQNNYQPY (79 aa)). A Dimethylated arginine; alternate modification is found at R289. At R289 the chain carries Omega-N-methylarginine; alternate.

As to quaternary structure, interacts with TNPO1. Interacts with ZNF148. Post-translationally, dimethylation of Arg-289 is probably of the asymmetric type. In terms of tissue distribution, expressed in skeletal muscle, myoblast, myotube, heart, brain, liver, kidney, heart, lung, stomach, small intestine, large intestine, spleen, and testis (at protein level). Expressed in brain, skeletal muscle, heart, lung, liver, stomach, small intestine, large intestine, kidney, spleen and testis.

It localises to the nucleus. Its subcellular location is the cytoplasm. Acts as a transcriptional regulator. Promotes transcription repression. Promotes transcription activation in differentiated myotubes. Binds to double- and single-stranded DNA sequences. Binds to the transcription suppressor CATR sequence of the COX5B promoter. Binds with high affinity to RNA molecules that contain AU-rich elements (AREs) found within the 3'-UTR of many proto-oncogenes and cytokine mRNAs. Binds both to nuclear and cytoplasmic poly(A) mRNAs. Binds to poly(G) and poly(A), but not to poly(U) or poly(C) RNA homopolymers. Binds to the 5'-ACUAGC-3' RNA consensus sequence. This chain is Heterogeneous nuclear ribonucleoprotein D-like (Hnrnpdl), found in Mus musculus (Mouse).